Consider the following 26-residue polypeptide: Metallothionein (26 aa).

Over residues 1-14 the composition is skewed to low complexity; the sequence is MGDCGCSGASSCNC. The disordered stretch occupies residues 1 to 26; the sequence is MGDCGCSGASSCNCGSGCSCSNCGSK. Positions 4, 6, 12, 14, 18, 20, and 23 each coordinate Cu(+). Positions 15–26 are enriched in cys residues; it reads GSGCSCSNCGSK.

This sequence belongs to the metallothionein superfamily. Type 8 family.

The sequence is that of Metallothionein (cmt) from Neurospora crassa (strain ATCC 24698 / 74-OR23-1A / CBS 708.71 / DSM 1257 / FGSC 987).